A 576-amino-acid polypeptide reads, in one-letter code: 2-isopropylmalate synthase (576 aa).

The Pyruvate carboxyltransferase domain maps to Pro31–Asn305. 4 residues coordinate Mg(2+): Asp40, His244, His246, and Asn280. The segment at Ala437–Ala576 is regulatory domain.

It belongs to the alpha-IPM synthase/homocitrate synthase family. LeuA type 2 subfamily. As to quaternary structure, homodimer. Requires Mg(2+) as cofactor.

It localises to the cytoplasm. It catalyses the reaction 3-methyl-2-oxobutanoate + acetyl-CoA + H2O = (2S)-2-isopropylmalate + CoA + H(+). It participates in amino-acid biosynthesis; L-leucine biosynthesis; L-leucine from 3-methyl-2-oxobutanoate: step 1/4. Its function is as follows. Catalyzes the condensation of the acetyl group of acetyl-CoA with 3-methyl-2-oxobutanoate (2-ketoisovalerate) to form 3-carboxy-3-hydroxy-4-methylpentanoate (2-isopropylmalate). This is 2-isopropylmalate synthase from Ralstonia nicotianae (strain ATCC BAA-1114 / GMI1000) (Ralstonia solanacearum).